Consider the following 227-residue polypeptide: ATP-dependent dethiobiotin synthetase BioD (227 aa).

13–18 is a binding site for ATP; that stretch reads DIGKTY. Thr-17 contacts Mg(2+). Lys-38 is an active-site residue. Ser-42 contributes to the substrate binding site. ATP-binding positions include Asp-55, 116 to 119, and 179 to 180; these read EGSG and NN. Asp-55 and Glu-116 together coordinate Mg(2+).

It belongs to the dethiobiotin synthetase family. As to quaternary structure, homodimer. Mg(2+) is required as a cofactor.

It is found in the cytoplasm. The catalysed reaction is (7R,8S)-7,8-diammoniononanoate + CO2 + ATP = (4R,5S)-dethiobiotin + ADP + phosphate + 3 H(+). The protein operates within cofactor biosynthesis; biotin biosynthesis; biotin from 7,8-diaminononanoate: step 1/2. Functionally, catalyzes a mechanistically unusual reaction, the ATP-dependent insertion of CO2 between the N7 and N8 nitrogen atoms of 7,8-diaminopelargonic acid (DAPA, also called 7,8-diammoniononanoate) to form a ureido ring. The protein is ATP-dependent dethiobiotin synthetase BioD of Clostridium botulinum (strain Langeland / NCTC 10281 / Type F).